The following is an 896-amino-acid chain: Translation initiation factor IF-2 (896 aa).

Disordered stretches follow at residues 53–81 and 117–301; these read HGGESAPTKMTLQRKSVSTLSVGSGSASK and AEEA…ESMD. Residues 60–79 show a composition bias toward polar residues; that stretch reads TKMTLQRKSVSTLSVGSGSA. Over residues 117–227 the composition is skewed to basic and acidic residues; that stretch reads AEEAASKAKA…ESEKTGDHHV (111 aa). Positions 254-266 are enriched in low complexity; sequence ATPAPAAAPANTG. Residues 273-282 show a composition bias toward basic and acidic residues; that stretch reads GKDNRRDSRN. Positions 283–294 are enriched in low complexity; that stretch reads ARGGRNARNNRS. Residues 394–563 form the tr-type G domain; the sequence is SRAPVVTIMG…LLEAEVLELK (170 aa). A G1 region spans residues 403 to 410; that stretch reads GHVDHGKT. Position 403-410 (403-410) interacts with GTP; the sequence is GHVDHGKT. The segment at 428 to 432 is G2; that stretch reads GITQH. The G3 stretch occupies residues 449–452; the sequence is DTPG. Residues 449 to 453 and 503 to 506 contribute to the GTP site; these read DTPGH and NKID. Residues 503 to 506 form a G4 region; it reads NKID. The segment at 539 to 541 is G5; the sequence is SAK.

This sequence belongs to the TRAFAC class translation factor GTPase superfamily. Classic translation factor GTPase family. IF-2 subfamily.

It localises to the cytoplasm. Functionally, one of the essential components for the initiation of protein synthesis. Protects formylmethionyl-tRNA from spontaneous hydrolysis and promotes its binding to the 30S ribosomal subunits. Also involved in the hydrolysis of GTP during the formation of the 70S ribosomal complex. In Shewanella sediminis (strain HAW-EB3), this protein is Translation initiation factor IF-2.